A 309-amino-acid polypeptide reads, in one-letter code: Olfactory receptor 8U9 (309 aa).

The Extracellular segment spans residues 1 to 28 (MTQINCTQVTEFILVGLTDRQELKMPLF). Asparagine 5 carries an N-linked (GlcNAc...) asparagine glycan. A helical transmembrane segment spans residues 29 to 49 (VLFLSIYLFTVVGNLGLILLI). The Cytoplasmic portion of the chain corresponds to 50–56 (RTDEKLN). Residues 57–77 (TPMYFFLSNLAFVDFCYSSVI) form a helical membrane-spanning segment. At 78–97 (TPKMLGNFLYKQNSISFNAC) the chain is on the extracellular side. The cysteines at positions 97 and 179 are disulfide-linked. Residues 98 to 118 (AAQLGCFLAFMTAECLLLASM) traverse the membrane as a helical segment. The Cytoplasmic segment spans residues 119–143 (AYDRYVAICNPLMYMVVMSPGICIQ). A helical membrane pass occupies residues 144-164 (LVAAPHSYSILVALFHTILTF). Residues 165 to 204 (RLSYCHSNIVNHFYCDDMPLLRLTCSDTRFKQLWIFACAG) lie on the Extracellular side of the membrane. A helical transmembrane segment spans residues 205–225 (IMFISSLLIVFVSYMFIISAI). Residues 226-239 (LRMHSAEGRQKAFS) are Cytoplasmic-facing. The chain crosses the membrane as a helical span at residues 240-260 (TCGSHMLAVTIFYGTLIFMYL). The Extracellular segment spans residues 261–272 (QPSSSHALDTDK). The helical transmembrane segment at 273–293 (MASVFYTVIIPMLNPLIYSLQ) threads the bilayer. The Cytoplasmic segment spans residues 294 to 309 (NKEVKEALKKIIINKN).

This sequence belongs to the G-protein coupled receptor 1 family.

It is found in the cell membrane. In terms of biological role, odorant receptor. The sequence is that of Olfactory receptor 8U9 (OR8U9) from Homo sapiens (Human).